Reading from the N-terminus, the 249-residue chain is Proteasome subunit alpha type-3 (249 aa).

Belongs to the peptidase T1A family. The 26S proteasome consists of a 20S proteasome core and two 19S regulatory subunits. The 20S proteasome core is composed of 28 subunits that are arranged in four stacked rings, resulting in a barrel-shaped structure. The two end rings are each formed by seven alpha subunits, and the two central rings are each formed by seven beta subunits. The catalytic chamber with the active sites is on the inside of the barrel.

Its subcellular location is the cytoplasm. The protein resides in the nucleus. Functionally, the proteasome is a multicatalytic proteinase complex which is characterized by its ability to cleave peptides with Arg, Phe, Tyr, Leu, and Glu adjacent to the leaving group at neutral or slightly basic pH. The proteasome has an ATP-dependent proteolytic activity. The sequence is that of Proteasome subunit alpha type-3 (PAG1) from Spinacia oleracea (Spinach).